We begin with the raw amino-acid sequence, 62 residues long: Large ribosomal subunit protein bL28 (62 aa).

Belongs to the bacterial ribosomal protein bL28 family.

The protein is Large ribosomal subunit protein bL28 of Phytoplasma mali (strain AT).